Consider the following 208-residue polypeptide: Uracil phosphoribosyltransferase (208 aa).

5-phospho-alpha-D-ribose 1-diphosphate-binding positions include R78, R103, and 130–138; that span reads DPMLATGGT. Uracil contacts are provided by residues I193 and 198–200; that span reads GDA. Residue D199 coordinates 5-phospho-alpha-D-ribose 1-diphosphate.

This sequence belongs to the UPRTase family. The cofactor is Mg(2+).

It carries out the reaction UMP + diphosphate = 5-phospho-alpha-D-ribose 1-diphosphate + uracil. The protein operates within pyrimidine metabolism; UMP biosynthesis via salvage pathway; UMP from uracil: step 1/1. Allosterically activated by GTP. In terms of biological role, catalyzes the conversion of uracil and 5-phospho-alpha-D-ribose 1-diphosphate (PRPP) to UMP and diphosphate. The protein is Uracil phosphoribosyltransferase of Solidesulfovibrio magneticus (strain ATCC 700980 / DSM 13731 / RS-1) (Desulfovibrio magneticus).